The chain runs to 403 residues: Odorant receptor 43b (403 aa).

Residues 1-49 lie on the Cytoplasmic side of the membrane; it reads MFGHFKLVYPAPISEPIQSRDSNAYMMETLRNSGLNLKNDFGIGRKIWR. The chain crosses the membrane as a helical span at residues 50–70; it reads VFSFTYNMVILPVSFPINYVI. Over 71 to 83 the chain is Extracellular; that stretch reads HLAEFPPELLLQS. Residues 84–104 traverse the membrane as a helical segment; sequence LQLCLNTWCFALKFFTLIVYT. The Cytoplasmic segment spans residues 105–139; sequence HRLELANKHFDELDKYCVKPAEKRKVRDMVATITR. Residues 140-160 traverse the membrane as a helical segment; that stretch reads LYLTFVVVYVLYATSTLLDGL. The Extracellular segment spans residues 161–193; sequence LHHRVPYNTYYPFINWRVDRTQMYIQSFLEYFT. Residues 194 to 214 traverse the membrane as a helical segment; that stretch reads VGYAIYVATATDSYPVIYVAA. Over 215-271 the chain is Cytoplasmic; sequence LRTHILLLKDRIIYLGDPSNEGSSDPSYMFKSLVDCIKAHRTMLNFCDAIQPIISGT. The helical transmembrane segment at 272–292 threads the bilayer; the sequence is IFAQFIICGSILGIIMINMVL. Over 293 to 299 the chain is Extracellular; sequence FADQSTR. The chain crosses the membrane as a helical span at residues 300–320; that stretch reads FGIVIYVMAVLLQTFPLCFYC. Residues 321–372 are Cytoplasmic-facing; the sequence is NAIVDDCKELAHALFHSAWWVQDKRYQRTVIQFLQKLQQPMTFTAMNIFNIN. A helical transmembrane segment spans residues 373–393; it reads LATNINVAKFAFTVYAIASGM. At 394-403 the chain is on the extracellular side; sequence NLDQKLSIKE.

It belongs to the insect chemoreceptor superfamily. Heteromeric odorant receptor channel (TC 1.A.69) family. Or2a subfamily. In terms of assembly, interacts with Orco. Complexes exist early in the endomembrane system in olfactory sensory neurons (OSNs), coupling these complexes to the conserved ciliary trafficking pathway. Expressed in 16 olfactory receptor neurons in a broad area across the antenna, including both anterior and posterior faces and in the maxillary palp. This expression pattern matches the distribution of the small sensilla basiconica. Expression in the antenna is observed late in antennal development at 93 hours APF.

Its subcellular location is the cell membrane. Its function is as follows. Odorant receptor which mediates acceptance or avoidance behavior, depending on its substrates. The odorant receptor repertoire encodes a large collection of odor stimuli that vary widely in identity, intensity, and duration. May form a complex with Orco to form odorant-sensing units, providing sensitive and prolonged odorant signaling and calcium permeability. The sequence is that of Odorant receptor 43b (Or43b) from Drosophila melanogaster (Fruit fly).